Consider the following 336-residue polypeptide: C4-dicarboxylate-binding periplasmic protein DctP (336 aa).

An N-terminal signal peptide occupies residues 1–31 (MTRLNTCTFIKQIVKMTSIAALLGASLNSWA). Lys-48, Lys-101, Arg-176, Asn-216, Asn-220, and Tyr-243 together coordinate (S)-malate. Succinate contacts are provided by Lys-48, Lys-101, Arg-176, Asn-216, Asn-220, and Tyr-243.

Belongs to the bacterial solute-binding protein 7 family. As to quaternary structure, the complex comprises the extracytoplasmic solute receptor protein DctP, and the two transmembrane proteins DctQ and DctM.

The protein resides in the periplasm. In terms of biological role, part of the tripartite ATP-independent periplasmic (TRAP) transport system DctPQM involved in C4-dicarboxylates uptake. Required for the utilization of succinate, fumarate, L-malate and alpha-ketoglutarate. Binds succinate and malate. In Shewanella loihica (strain ATCC BAA-1088 / PV-4), this protein is C4-dicarboxylate-binding periplasmic protein DctP.